Here is a 153-residue protein sequence, read N- to C-terminus: 3-hydroxyacyl-[acyl-carrier-protein] dehydratase FabZ (153 aa).

His-56 is an active-site residue.

The protein belongs to the thioester dehydratase family. FabZ subfamily.

Its subcellular location is the cytoplasm. The catalysed reaction is a (3R)-hydroxyacyl-[ACP] = a (2E)-enoyl-[ACP] + H2O. Involved in unsaturated fatty acids biosynthesis. Catalyzes the dehydration of short chain beta-hydroxyacyl-ACPs and long chain saturated and unsaturated beta-hydroxyacyl-ACPs. The chain is 3-hydroxyacyl-[acyl-carrier-protein] dehydratase FabZ from Nitrosomonas europaea (strain ATCC 19718 / CIP 103999 / KCTC 2705 / NBRC 14298).